The primary structure comprises 249 residues: Type III pantothenate kinase (249 aa).

6–13 (DCGNSFIK) contributes to the ATP binding site. Substrate is bound by residues Tyr-93 and 100-103 (GMDR). The Proton acceptor role is filled by Asp-102. Asp-122 contacts K(+). Thr-125 provides a ligand contact to ATP. Residue Thr-181 participates in substrate binding.

The protein belongs to the type III pantothenate kinase family. In terms of assembly, homodimer. It depends on NH4(+) as a cofactor. Requires K(+) as cofactor.

The protein resides in the cytoplasm. The enzyme catalyses (R)-pantothenate + ATP = (R)-4'-phosphopantothenate + ADP + H(+). Its pathway is cofactor biosynthesis; coenzyme A biosynthesis; CoA from (R)-pantothenate: step 1/5. Functionally, catalyzes the phosphorylation of pantothenate (Pan), the first step in CoA biosynthesis. This is Type III pantothenate kinase from Pseudomonas putida (strain ATCC 700007 / DSM 6899 / JCM 31910 / BCRC 17059 / LMG 24140 / F1).